We begin with the raw amino-acid sequence, 574 residues long: Proline--tRNA ligase (574 aa).

Belongs to the class-II aminoacyl-tRNA synthetase family. ProS type 1 subfamily. As to quaternary structure, homodimer.

It localises to the cytoplasm. The catalysed reaction is tRNA(Pro) + L-proline + ATP = L-prolyl-tRNA(Pro) + AMP + diphosphate. Its function is as follows. Catalyzes the attachment of proline to tRNA(Pro) in a two-step reaction: proline is first activated by ATP to form Pro-AMP and then transferred to the acceptor end of tRNA(Pro). As ProRS can inadvertently accommodate and process non-cognate amino acids such as alanine and cysteine, to avoid such errors it has two additional distinct editing activities against alanine. One activity is designated as 'pretransfer' editing and involves the tRNA(Pro)-independent hydrolysis of activated Ala-AMP. The other activity is designated 'posttransfer' editing and involves deacylation of mischarged Ala-tRNA(Pro). The misacylated Cys-tRNA(Pro) is not edited by ProRS. This chain is Proline--tRNA ligase, found in Oleidesulfovibrio alaskensis (strain ATCC BAA-1058 / DSM 17464 / G20) (Desulfovibrio alaskensis).